The chain runs to 144 residues: Probable disulfide formation protein (144 aa).

The chain crosses the membrane as a helical span at residues Trp-10 to Phe-29. A disulfide bridge links Cys-39 with Cys-42. Transmembrane regions (helical) follow at residues Phe-44–Ser-63 and Tyr-70–Leu-87. A disulfide bond links Cys-100 and Cys-107. Residues Gly-116–Ile-138 form a helical membrane-spanning segment.

Belongs to the DsbB family. BdbC subfamily.

Its subcellular location is the cell inner membrane. Functionally, required for disulfide bond formation in some proteins. This is Probable disulfide formation protein from Metapseudomonas resinovorans (Pseudomonas resinovorans).